The chain runs to 60 residues: Large ribosomal subunit protein uL30 (60 aa).

The protein belongs to the universal ribosomal protein uL30 family. Part of the 50S ribosomal subunit.

The sequence is that of Large ribosomal subunit protein uL30 from Acidovorax ebreus (strain TPSY) (Diaphorobacter sp. (strain TPSY)).